Reading from the N-terminus, the 211-residue chain is Thymidylate kinase (211 aa).

ATP is bound at residue 11–18 (GPDGAGKT).

The protein belongs to the thymidylate kinase family.

It carries out the reaction dTMP + ATP = dTDP + ADP. In terms of biological role, phosphorylation of dTMP to form dTDP in both de novo and salvage pathways of dTTP synthesis. This Streptococcus pyogenes serotype M18 (strain MGAS8232) protein is Thymidylate kinase.